The sequence spans 101 residues: Small ribosomal subunit protein uS14 (101 aa).

The protein belongs to the universal ribosomal protein uS14 family. As to quaternary structure, part of the 30S ribosomal subunit. Contacts proteins S3 and S10.

In terms of biological role, binds 16S rRNA, required for the assembly of 30S particles and may also be responsible for determining the conformation of the 16S rRNA at the A site. This Synechococcus sp. (strain JA-3-3Ab) (Cyanobacteria bacterium Yellowstone A-Prime) protein is Small ribosomal subunit protein uS14.